The primary structure comprises 632 residues: tRNA uridine 5-carboxymethylaminomethyl modification enzyme MnmG (632 aa).

FAD-binding positions include 15-20 (GAGHAG), Val127, and Ser182. 276–290 (GARYCPSIEDKIVRF) contacts NAD(+). Gln373 provides a ligand contact to FAD.

Belongs to the MnmG family. As to quaternary structure, homodimer. Heterotetramer of two MnmE and two MnmG subunits. The cofactor is FAD.

The protein localises to the cytoplasm. In terms of biological role, NAD-binding protein involved in the addition of a carboxymethylaminomethyl (cmnm) group at the wobble position (U34) of certain tRNAs, forming tRNA-cmnm(5)s(2)U34. The protein is tRNA uridine 5-carboxymethylaminomethyl modification enzyme MnmG of Enterococcus faecalis (strain ATCC 700802 / V583).